The primary structure comprises 568 residues: PTS system lactose-specific EIICB component (568 aa).

The PTS EIIC type-3 domain occupies Leu7 to Phe409. The next 9 membrane-spanning stretches (helical) occupy residues Gly30–Val50, Ile62–Gly82, Ile103–Pro123, Gly128–Val148, Phe183–Val203, Gly222–His242, Phe283–Ile303, Ile339–Val359, and Val389–Phe409. In terms of domain architecture, PTS EIIB type-3 spans Glu466 to Asp568. The Phosphocysteine intermediate; for EIIB activity role is filled by Cys473. A Phosphocysteine; by EIIA modification is found at Cys473.

The protein localises to the cell membrane. The catalysed reaction is lactose(out) + N(pros)-phospho-L-histidyl-[protein] = lactose 6-phosphate(in) + L-histidyl-[protein]. The phosphoenolpyruvate-dependent sugar phosphotransferase system (sugar PTS), a major carbohydrate active transport system, catalyzes the phosphorylation of incoming sugar substrates concomitantly with their translocation across the cell membrane. The enzyme II LacEF PTS system is involved in lactose transport. The protein is PTS system lactose-specific EIICB component of Lactococcus lactis subsp. lactis (Streptococcus lactis).